A 131-amino-acid polypeptide reads, in one-letter code: Small ribosomal subunit protein uS8 (131 aa).

This sequence belongs to the universal ribosomal protein uS8 family. In terms of assembly, part of the 30S ribosomal subunit. Contacts proteins S5 and S12.

One of the primary rRNA binding proteins, it binds directly to 16S rRNA central domain where it helps coordinate assembly of the platform of the 30S subunit. The sequence is that of Small ribosomal subunit protein uS8 from Acinetobacter baumannii (strain AB307-0294).